The sequence spans 445 residues: Xylose isomerase (445 aa).

Active-site residues include His-107 and Asp-110. Residues Glu-238, Glu-274, His-277, Asp-302, Asp-313, Asp-315, and Asp-345 each contribute to the Mg(2+) site.

This sequence belongs to the xylose isomerase family. In terms of assembly, homotetramer. Mg(2+) is required as a cofactor.

The protein resides in the cytoplasm. The catalysed reaction is alpha-D-xylose = alpha-D-xylulofuranose. The sequence is that of Xylose isomerase (xylA) from Bacillus spizizenii (strain ATCC 23059 / NRRL B-14472 / W23) (Bacillus subtilis subsp. spizizenii).